A 260-amino-acid chain; its full sequence is Late transcription factor 1 (260 aa).

The protein belongs to the chordopoxvirinae VLTF-1 family. Interacts with the late transcription factors VLTF-2 and VLTF-3. Interacts with the late transcription elongation factor VLTF-4. Interacts with itself.

Associates with RNA polymerase to initiate transcription from late gene promoters. This Vaccinia virus (strain Ankara) (VACV) protein is Late transcription factor 1 (OPG093).